A 307-amino-acid chain; its full sequence is Membrane protein insertase YidC 2 (307 aa).

The signal sequence occupies residues 1–23 (MKLTLNRILFSGLALSILFTLTG). Cysteine 24 carries the N-palmitoyl cysteine lipid modification. Cysteine 24 is lipidated: S-diacylglycerol cysteine. 5 helical membrane passes run 58–78 (LGYGLAIIIVTIIVRTLILPL), 135–155 (LGGIGCLPLLIQMPFFSAMYF), 179–199 (VLTAIIAALYFFQSWLSMMAV), 209–225 (TMMYTMPIMMIFMSFSL), and 231–251 (LYWLVGGFFSIIQQLITTYLL). Residues 263-307 (YAKTPPKAYQSTSSRKDVTPSQNMEQANLPKKIKSNRNAGKQRKR) form a disordered region. Residues 271-288 (YQSTSSRKDVTPSQNMEQ) are compositionally biased toward polar residues. Positions 293–307 (KKIKSNRNAGKQRKR) are enriched in basic residues.

It belongs to the OXA1/ALB3/YidC family. Type 2 subfamily.

The protein localises to the cell membrane. Required for the insertion and/or proper folding and/or complex formation of integral membrane proteins into the membrane. Involved in integration of membrane proteins that insert both dependently and independently of the Sec translocase complex, as well as at least some lipoproteins. The polypeptide is Membrane protein insertase YidC 2 (Streptococcus pyogenes serotype M18 (strain MGAS8232)).